A 333-amino-acid polypeptide reads, in one-letter code: Methionine import ATP-binding protein MetN 1 (333 aa).

An ABC transporter domain is found at 2-241; that stretch reads ITFEGVEKVY…PETETAKSFV (240 aa). 38 to 45 lines the ATP pocket; the sequence is GFSGAGKS.

The protein belongs to the ABC transporter superfamily. Methionine importer (TC 3.A.1.24) family. The complex is composed of two ATP-binding proteins (MetN), two transmembrane proteins (MetI) and a solute-binding protein (MetQ).

The protein localises to the cell membrane. It catalyses the reaction L-methionine(out) + ATP + H2O = L-methionine(in) + ADP + phosphate + H(+). It carries out the reaction D-methionine(out) + ATP + H2O = D-methionine(in) + ADP + phosphate + H(+). Functionally, part of the ABC transporter complex MetNIQ involved in methionine import. Responsible for energy coupling to the transport system. The polypeptide is Methionine import ATP-binding protein MetN 1 (Bacillus licheniformis (strain ATCC 14580 / DSM 13 / JCM 2505 / CCUG 7422 / NBRC 12200 / NCIMB 9375 / NCTC 10341 / NRRL NRS-1264 / Gibson 46)).